Here is a 329-residue protein sequence, read N- to C-terminus: DNA repair and recombination protein RadA (329 aa).

107–114 lines the ATP pocket; that stretch reads GEFGSGKS.

The protein belongs to the eukaryotic RecA-like protein family.

Functionally, involved in DNA repair and in homologous recombination. Binds and assemble on single-stranded DNA to form a nucleoprotein filament. Hydrolyzes ATP in a ssDNA-dependent manner and promotes DNA strand exchange between homologous DNA molecules. The chain is DNA repair and recombination protein RadA from Methanocorpusculum labreanum (strain ATCC 43576 / DSM 4855 / Z).